Consider the following 280-residue polypeptide: Thymidylate synthase (280 aa).

DUMP is bound at residue arginine 21. Histidine 51 is a binding site for (6R)-5,10-methylene-5,6,7,8-tetrahydrofolate. Residue 142-143 participates in dUMP binding; sequence RR. Cysteine 162 functions as the Nucleophile in the catalytic mechanism. Residues 182–185, asparagine 193, and 223–225 each bind dUMP; these read RSAD and HLY. Aspartate 185 serves as a coordination point for (6R)-5,10-methylene-5,6,7,8-tetrahydrofolate. Position 279 (alanine 279) interacts with (6R)-5,10-methylene-5,6,7,8-tetrahydrofolate.

Belongs to the thymidylate synthase family. Bacterial-type ThyA subfamily. Homodimer.

The protein resides in the cytoplasm. It carries out the reaction dUMP + (6R)-5,10-methylene-5,6,7,8-tetrahydrofolate = 7,8-dihydrofolate + dTMP. It participates in pyrimidine metabolism; dTTP biosynthesis. Functionally, catalyzes the reductive methylation of 2'-deoxyuridine-5'-monophosphate (dUMP) to 2'-deoxythymidine-5'-monophosphate (dTMP) while utilizing 5,10-methylenetetrahydrofolate (mTHF) as the methyl donor and reductant in the reaction, yielding dihydrofolate (DHF) as a by-product. This enzymatic reaction provides an intracellular de novo source of dTMP, an essential precursor for DNA biosynthesis. This Acinetobacter baumannii (strain AB307-0294) protein is Thymidylate synthase.